The chain runs to 390 residues: Flap endonuclease 1-2 (390 aa).

Residues 1–108 are N-domain; sequence MGIHQLMQFL…GELARRKKLK (108 aa). Residue D34 coordinates Mg(2+). DNA is bound at residue R74. Positions 90, 162, 164, 183, and 185 each coordinate Mg(2+). Positions 126–254 are I-domain; it reads QALLQNQRTT…GTAYKLIKEY (129 aa). E162 lines the DNA pocket. Residues G232 and D234 each contribute to the DNA site. D234 is a Mg(2+) binding site. The tract at residues 348–356 is interaction with PCNA; sequence FQSRLENFF. A disordered region spans residues 359–390; sequence TTKIIHPNNSKAKAKSNKKTEQPQKSGGKKKI.

This sequence belongs to the XPG/RAD2 endonuclease family. FEN1 subfamily. In terms of assembly, interacts with PCNA. Three molecules of FEN1 bind to one PCNA trimer with each molecule binding to one PCNA monomer. PCNA stimulates the nuclease activity without altering cleavage specificity. It depends on Mg(2+) as a cofactor. Phosphorylated. Phosphorylation upon DNA damage induces relocalization to the nuclear plasma.

It localises to the nucleus. It is found in the nucleolus. Its subcellular location is the nucleoplasm. The protein resides in the mitochondrion. In terms of biological role, structure-specific nuclease with 5'-flap endonuclease and 5'-3' exonuclease activities involved in DNA replication and repair. During DNA replication, cleaves the 5'-overhanging flap structure that is generated by displacement synthesis when DNA polymerase encounters the 5'-end of a downstream Okazaki fragment. It enters the flap from the 5'-end and then tracks to cleave the flap base, leaving a nick for ligation. Also involved in the long patch base excision repair (LP-BER) pathway, by cleaving within the apurinic/apyrimidinic (AP) site-terminated flap. Acts as a genome stabilization factor that prevents flaps from equilibrating into structures that lead to duplications and deletions. Also possesses 5'-3' exonuclease activity on nicked or gapped double-stranded DNA, and exhibits RNase H activity. Also involved in replication and repair of rDNA and in repairing mitochondrial DNA. The protein is Flap endonuclease 1-2 of Paramecium tetraurelia.